The sequence spans 109 residues: Phycoerythrin alpha-1 subunit (109 aa).

(2R,3E)-phycocyanobilin-binding residues include Val-6, Ala-16, Phe-17, Pro-20, Asp-27, Ala-28, and Ala-39.

The protein belongs to the phycoerythrin family. In terms of assembly, heterotetramer of 2 identical alpha chains and 2 identical beta chains which form 2 alpha-beta heterodimers within the heterotetramer. The two alpha-beta heterodimers are rotated to an open configuration in contrast to the closed configuration found in other cryptophyte species due to the insertion of a single amino acid, Asp-65, in a conserved region of the alpha chain. In the open form, the central chromophores are not in physical contact but are separated by a water-filled channel. In terms of processing, contains three phycocyanobilin chromophores with binding mediated by both the alpha and beta subunits.

Its subcellular location is the plastid. It localises to the chloroplast thylakoid membrane. In terms of biological role, light-harvesting photosynthetic tetrapyrrole chromophore-protein from the phycobiliprotein complex. The protein is Phycoerythrin alpha-1 subunit of Hemiselmis virescens.